The following is a 450-amino-acid chain: Salicylate synthase (450 aa).

The active-site Proton donor is glutamate 252. Residue glycine 270–threonine 271 coordinates substrate. Glutamate 297 contacts Mg(2+). Substrate is bound by residues tyrosine 385, arginine 405, and glycine 419–glycine 421. Residues glutamate 431 and glutamate 434 each contribute to the Mg(2+) site. Lysine 438 serves as a coordination point for substrate.

Belongs to the anthranilate synthase component I family. Salicylate synthase subfamily. Monomer. Requires Mg(2+) as cofactor.

It catalyses the reaction chorismate = isochorismate. It carries out the reaction isochorismate = salicylate + pyruvate. The catalysed reaction is chorismate = prephenate. It participates in siderophore biosynthesis; mycobactin biosynthesis. Involved in the incorporation of salicylate into the virulence-conferring salicylate-based siderophore mycobactin. Catalyzes the initial conversion of chorismate to yield the intermediate isochorismate (isochorismate synthase activity), and the subsequent elimination of the enolpyruvyl side chain in a lyase reaction to give salicylate (isochorismate pyruvate-lyase activity). In the absence of magnesium, MbtI displays a chorismate mutase activity and converts chorismate to prephenate. The sequence is that of Salicylate synthase (mbtI) from Mycobacterium bovis (strain ATCC BAA-935 / AF2122/97).